A 225-amino-acid chain; its full sequence is 7-cyano-7-deazaguanine synthase (225 aa).

10–20 (LSGGIDSATAA) provides a ligand contact to ATP. Zn(2+)-binding residues include C191, C199, C202, and C205.

It belongs to the QueC family. Requires Zn(2+) as cofactor.

It catalyses the reaction 7-carboxy-7-deazaguanine + NH4(+) + ATP = 7-cyano-7-deazaguanine + ADP + phosphate + H2O + H(+). It functions in the pathway purine metabolism; 7-cyano-7-deazaguanine biosynthesis. In terms of biological role, catalyzes the ATP-dependent conversion of 7-carboxy-7-deazaguanine (CDG) to 7-cyano-7-deazaguanine (preQ(0)). The polypeptide is 7-cyano-7-deazaguanine synthase (Prochlorococcus marinus (strain NATL2A)).